The chain runs to 235 residues: Probable tetraspanin tspA (235 aa).

Residues 1 to 18 lie on the Cytoplasmic side of the membrane; sequence MVDTSNLLPQTPRLLKVP. A helical membrane pass occupies residues 19–39; the sequence is LIILNIILWILGLVLVIVGGI. The Extracellular segment spans residues 40–68; it reads CVSFLSNFKDFTKASDAKSALSNLTTSIP. N-linked (GlcNAc...) asparagine glycosylation occurs at Asn-62. A helical membrane pass occupies residues 69–89; the sequence is AGVLVIGILFVIFTVVGCFVA. Residues 90-93 lie on the Cytoplasmic side of the membrane; sequence YKEK. A helical transmembrane segment spans residues 94-114; it reads LVGLVIYCAVMLILLVILIGV. The Extracellular segment spans residues 115-200; that stretch reads GGKAITLHND…FSSKIYAVGA (86 aa). Asn-139, Asn-143, and Asn-160 each carry an N-linked (GlcNAc...) asparagine glycan. Residues 201–221 form a helical membrane-spanning segment; it reads AGLAIGIIELVAILFSLFLII. Topologically, residues 222 to 235 are cytoplasmic; the sequence is RICRSPRTRSYDQY.

This sequence belongs to the tetraspanin (TM4SF) family.

The protein resides in the membrane. The protein is Probable tetraspanin tspA (tspA) of Dictyostelium discoideum (Social amoeba).